The following is an 82-amino-acid chain: Small ribosomal subunit protein bS16 (82 aa).

The protein belongs to the bacterial ribosomal protein bS16 family.

This chain is Small ribosomal subunit protein bS16, found in Aeromonas hydrophila subsp. hydrophila (strain ATCC 7966 / DSM 30187 / BCRC 13018 / CCUG 14551 / JCM 1027 / KCTC 2358 / NCIMB 9240 / NCTC 8049).